Reading from the N-terminus, the 1456-residue chain is Retrovirus-related Pol polyprotein from transposon RE2 (1456 aa).

Positions 205–252 are disordered; that stretch reads NVVTHRNTNTNRNQNNRGDNRNYNNNNNRSNSWQPSSSGSRSDNRQPK. A compositionally biased stretch (low complexity) spans 210–245; that stretch reads RNTNTNRNQNNRGDNRNYNNNNNRSNSWQPSSSGSR. The segment at 257–273 adopts a CCHC-type zinc-finger fold; the sequence is RCQICSVQGHSAKRCPQ. The segment covering 276 to 291 has biased composition (low complexity); that stretch reads QFQSTTNQQQSTSPFT. Residues 276-295 form a disordered region; it reads QFQSTTNQQQSTSPFTPWQP. Asp-313 acts as the For protease activity in catalysis. Positions 498-661 constitute an Integrase catalytic domain; it reads TSSKPLEYIY…SPFQKLFGQP (164 aa). Residues Asp-509 and Asp-571 each coordinate Mg(2+). Residues 738–754 are compositionally biased toward polar residues; sequence STSQEQRSDSAPNWPSH. Residues 738–896 form a disordered region; sequence STSQEQRSDS…PPLPPVLPAP (159 aa). Residues 793–814 show a composition bias toward low complexity; the sequence is SSSNLPSSSISSPSSSEPTAPS. Polar residues predominate over residues 816–827; that stretch reads NGPQPTAQPHQT. Composition is skewed to low complexity over residues 828–841 and 849–886; these read QNSN…NNPN and SPNQ…STST. A compositionally biased stretch (pro residues) spans 887-896; sequence PPLPPVLPAP. The Reverse transcriptase Ty1/copia-type domain occupies 965–1208; sequence NHTWDLVPPP…LTAKPVATPM (244 aa).

It catalyses the reaction DNA(n) + a 2'-deoxyribonucleoside 5'-triphosphate = DNA(n+1) + diphosphate. This Arabidopsis thaliana (Mouse-ear cress) protein is Retrovirus-related Pol polyprotein from transposon RE2 (RE2).